We begin with the raw amino-acid sequence, 357 residues long: Eukaryotic translation initiation factor 3 subunit H (357 aa).

Residues 20–162 (VELESLLVMN…MRAYQLTPEF (143 aa)) form the MPN domain.

This sequence belongs to the eIF-3 subunit H family. As to quaternary structure, component of the eukaryotic translation initiation factor 3 (eIF-3) complex. The eIF-3 complex appears to include tif32/eif3a, SPAC25G10.08/eif3b, tif33/eif3c, SPBC4C3.07/eif3f, tif35/eif3g and sum1/eif3i. This set of common subunits may also associate exclusively with either moe1/eif3d and int6/eif3e, or with SPAC821.05/eif3h and SPAC1751.03/eif3m. The eIF-3 complex may also include SPAC3A12.13c/eif3j.

The protein localises to the cytoplasm. Its subcellular location is the nucleus. Its function is as follows. Component of the eukaryotic translation initiation factor 3 (eIF-3) complex, which is involved in protein synthesis of a specialized repertoire of mRNAs and, together with other initiation factors, stimulates binding of mRNA and methionyl-tRNAi to the 40S ribosome. The eIF-3 complex specifically targets and initiates translation of a subset of mRNAs involved in cell proliferation. In Schizosaccharomyces pombe (strain 972 / ATCC 24843) (Fission yeast), this protein is Eukaryotic translation initiation factor 3 subunit H (eif3h).